We begin with the raw amino-acid sequence, 135 residues long: MLSPKKMKYRKRMRGRLKGKPTGGTDLTFGDFGLQATECGYINARQIEAARIALTRKIKRTGKTWIRFFPDKPVTKKPAEVRMGKGKGPTDAWVAAIRPGRILYEMEGVPRELAKEALRLAAHKLSVKTRFVERS.

The protein belongs to the universal ribosomal protein uL16 family. In terms of assembly, part of the 50S ribosomal subunit.

Functionally, binds 23S rRNA and is also seen to make contacts with the A and possibly P site tRNAs. The sequence is that of Large ribosomal subunit protein uL16 from Desulforapulum autotrophicum (strain ATCC 43914 / DSM 3382 / VKM B-1955 / HRM2) (Desulfobacterium autotrophicum).